A 423-amino-acid polypeptide reads, in one-letter code: Histidine--tRNA ligase 2 (423 aa).

It belongs to the class-II aminoacyl-tRNA synthetase family. Homodimer.

The protein resides in the cytoplasm. The catalysed reaction is tRNA(His) + L-histidine + ATP = L-histidyl-tRNA(His) + AMP + diphosphate + H(+). This is Histidine--tRNA ligase 2 from Bacillus cereus (strain ATCC 14579 / DSM 31 / CCUG 7414 / JCM 2152 / NBRC 15305 / NCIMB 9373 / NCTC 2599 / NRRL B-3711).